Reading from the N-terminus, the 199-residue chain is Recombination protein RecR (199 aa).

The C4-type zinc finger occupies 58-73; that stretch reads CSICCNITDTDPCSMC. Residues 81–176 enclose the Toprim domain; sequence SVICVVEDPR…KVTRIAHGLP (96 aa).

It belongs to the RecR family.

May play a role in DNA repair. It seems to be involved in an RecBC-independent recombinational process of DNA repair. It may act with RecF and RecO. The chain is Recombination protein RecR from Clostridioides difficile (strain 630) (Peptoclostridium difficile).